Here is a 2849-residue protein sequence, read N- to C-terminus: Polycystin-1-like protein 1 (2849 aa).

Residues 1–1748 (MAEEAAQNIS…SDISKLQSHP (1748 aa)) are Extracellular-facing. Residues N8, N295, N338, N376, N447, N482, N514, N605, N657, N751, N875, N926, and N937 are each glycosylated (N-linked (GlcNAc...) asparagine). 2 PKD domains span residues 508-590 (SVSV…VQKK) and 592-673 (VANR…VCEP). In terms of domain architecture, REJ spans 674 to 1571 (CQPPLVKNMG…GEEDGLDNRR (898 aa)). Positions 970–987 (NLLPTEPGTADPDATTTP) are enriched in low complexity. Disordered regions lie at residues 970–1068 (NLLP…PHLS) and 1081–1118 (IPSG…DPSL). Residues 1053–1068 (RSERSQPTHSPDPHLS) are compositionally biased toward basic and acidic residues. N-linked (GlcNAc...) asparagine glycans are attached at residues N1233, N1301, N1306, N1572, N1681, and N1716. A GAIN-B domain is found at 1587–1735 (QFTELSENPQ…ALLRRKLKAS (149 aa)). The cysteines at positions 1691 and 1717 are disulfide-linked. The GPS stretch occupies residues 1691–1735 (CLFWDKREWKSERFSPQPGTSPEKVNCSYHRLAAFALLRRKLKAS). Residues 1749–1769 (ENLLPSIFIMGSVILYGFLVA) form a helical membrane-spanning segment. At 1770-1956 (KSRQVDHHEK…SSSRYLHTPR (187 aa)) the chain is on the cytoplasmic side. The PLAT domain occupies 1796–1913 (QLYAVVIDTG…HDGRVERELT (118 aa)). The helical transmembrane segment at 1957–1977 (LTVSFSLLCVYACLTALVAAG) threads the bilayer. Over 1978-1992 (GQEQPHLDVSPTLGS) the chain is Extracellular. Residues 1993-2013 (FRVGLLCTLLASPGAQLLSLL) traverse the membrane as a helical segment. The Cytoplasmic portion of the chain corresponds to 2014–2135 (FRLSKEAPGS…SRALQPWWSS (122 aa)). A disordered region spans residues 2023-2089 (SARVEPHSPL…GTACPAPKLQ (67 aa)). The chain crosses the membrane as a helical span at residues 2136–2156 (AVWAICGTASLACSLGTGFLA). Topologically, residues 2157–2174 (YRFGQEQCVQWLHLLSLS) are extracellular. A helical transmembrane segment spans residues 2175-2195 (VVCCIFITQPLMVCLMALGFA). Topologically, residues 2196–2281 (WKRRADNHFF…QRMRRESRTR (86 aa)) are cytoplasmic. Residues 2282 to 2302 (AALRDISMDILMLLLLLCVIY) form a helical membrane-spanning segment. Residues 2303 to 2522 (GRFSQDEYSL…FRSDSALQYH (220 aa)) lie on the Extracellular side of the membrane. The N-linked (GlcNAc...) asparagine glycan is linked to N2426. A helical membrane pass occupies residues 2523–2543 (LMLPQLVFLALSLIHLCVQLY). The Cytoplasmic segment spans residues 2544–2562 (RMMDKGVLSYWRKPRNWLE). Residues 2563–2583 (LSVVGVSLTYYAVSGHLVTLA) traverse the membrane as a helical segment. Topologically, residues 2584–2616 (GDVTNQFHRGLCRAFMDLTLMASWNQRARWLRG) are extracellular. Residues 2617-2637 (ILLFLFTLKCVYLPGIQNTMA) form a helical membrane-spanning segment. The Cytoplasmic segment spans residues 2638 to 2646 (SCSSMMRHS). A helical membrane pass occupies residues 2647–2667 (LPSIFVAGLVGALMLAALSHL). Over 2668–2711 (HRFLLSMWVLPPGTFTDAFPGLLFHFPRRSQKDCLLGLSKSDQR) the chain is Extracellular. The chain crosses the membrane as a helical span at residues 2712–2732 (AMACYFGILLIVSATLCFGML). At 2733–2849 (RGFLMTLPQK…AAEPADIKDF (117 aa)) the chain is on the cytoplasmic side.

The protein belongs to the polycystin family. Heterodimer. Interacts with PKD2 to form a calcium channel. Interacts with PKD2L1; to form ciliary calcium channel. May interact with GNA12, GNAS, GNAI1 and GNAI2. In terms of tissue distribution, detected in testis and in fetal and adult heart.

It localises to the cell projection. It is found in the cilium membrane. In terms of biological role, component of a calcium-permeant ion channel formed by PKD1L2 and PKD1L1 in primary cilia, where it controls cilium calcium concentration, without affecting cytoplasmic calcium concentration, and regulates sonic hedgehog/SHH signaling and GLI2 transcription. The PKD1L1:PKD2L1 channel complex is mechanosensitive only at high pressures and is highly temperature sensitive. Also involved in left/right axis specification downstream of nodal flow by forming a complex with PKD2 in cilia to facilitate flow detection in left/right patterning. May function as a G-protein-coupled receptor. The protein is Polycystin-1-like protein 1 of Homo sapiens (Human).